The primary structure comprises 447 residues: MHHRKYFGTDGIRGKVGDMPITPDFFLKLGWAAGKILARQDSRKIIIGKDTRISGYMLESALEAGLAAAGFSALLTGPMPTPAIAYLTRTFRAEAGIVISASHNPFYDNGIKFFDINGSKLSDSLEEAIEAQLEKPLTCVESAQLGKARRIVDAAGRYIEFCKGTFPSEFNLKNFKIVVDCSNGATYHIAPSVLKELGATVISIACEPNGLNINKECGATNIGMLQKSVLAEQADLGIALDGDGDRLIMVDHLGNKVDGDQIVYLIAKEACRQQQLKGGVVGTLMSNMGLELALQRLKIPFIRAKVGDRYVLEKMQKHGYRIGAENSGHIILLDKTTTGDGMIAALQVFKVIIQNQMTLHELCSEIKLLPQVLVNFSFSGNKNVLQSDAIASLVKKVESTLAGRGRILLRTSGTEPVIRVMIEADQEEHFIKTLAEEVAEKIKKSLY.

Ser102 functions as the Phosphoserine intermediate in the catalytic mechanism. Mg(2+)-binding residues include Ser102, Asp241, Asp243, and Asp245. Ser102 bears the Phosphoserine mark.

Belongs to the phosphohexose mutase family. The cofactor is Mg(2+). Post-translationally, activated by phosphorylation.

It catalyses the reaction alpha-D-glucosamine 1-phosphate = D-glucosamine 6-phosphate. Catalyzes the conversion of glucosamine-6-phosphate to glucosamine-1-phosphate. This Hamiltonella defensa subsp. Acyrthosiphon pisum (strain 5AT) protein is Phosphoglucosamine mutase.